The following is a 307-amino-acid chain: Glycerol-3-phosphate dehydrogenase [NAD(P)+] (307 aa).

Residues tryptophan 14, arginine 34, arginine 35, and lysine 82 each contribute to the NADPH site. Sn-glycerol 3-phosphate is bound by residues lysine 82 and glycine 110. An NADPH-binding site is contributed by serine 114. Lysine 165, aspartate 218, serine 228, arginine 229, and asparagine 230 together coordinate sn-glycerol 3-phosphate. Catalysis depends on lysine 165, which acts as the Proton acceptor. Arginine 229 is a binding site for NADPH. Glutamate 255 lines the NADPH pocket.

The protein belongs to the NAD-dependent glycerol-3-phosphate dehydrogenase family.

It localises to the cytoplasm. It catalyses the reaction sn-glycerol 3-phosphate + NAD(+) = dihydroxyacetone phosphate + NADH + H(+). It carries out the reaction sn-glycerol 3-phosphate + NADP(+) = dihydroxyacetone phosphate + NADPH + H(+). It participates in membrane lipid metabolism; glycerophospholipid metabolism. In terms of biological role, catalyzes the reduction of the glycolytic intermediate dihydroxyacetone phosphate (DHAP) to sn-glycerol 3-phosphate (G3P), the key precursor for phospholipid synthesis. This is Glycerol-3-phosphate dehydrogenase [NAD(P)+] from Nostoc sp. (strain PCC 7120 / SAG 25.82 / UTEX 2576).